The primary structure comprises 338 residues: Lipoate-protein ligase A (338 aa).

The BPL/LPL catalytic domain occupies 29–216; it reads PATQRVLFLW…AFFAHYGERV (188 aa). ATP contacts are provided by residues Arg-71, 76–79, and Lys-134; that span reads GAVF. A (R)-lipoate-binding site is contributed by Lys-134.

It belongs to the LplA family. Monomer.

It is found in the cytoplasm. It catalyses the reaction L-lysyl-[lipoyl-carrier protein] + (R)-lipoate + ATP = N(6)-[(R)-lipoyl]-L-lysyl-[lipoyl-carrier protein] + AMP + diphosphate + H(+). The protein operates within protein modification; protein lipoylation via exogenous pathway; protein N(6)-(lipoyl)lysine from lipoate: step 1/2. It functions in the pathway protein modification; protein lipoylation via exogenous pathway; protein N(6)-(lipoyl)lysine from lipoate: step 2/2. Its function is as follows. Catalyzes both the ATP-dependent activation of exogenously supplied lipoate to lipoyl-AMP and the transfer of the activated lipoyl onto the lipoyl domains of lipoate-dependent enzymes. The protein is Lipoate-protein ligase A of Escherichia coli O1:K1 / APEC.